The following is a 252-amino-acid chain: Trans-aconitate 2-methyltransferase (252 aa).

It belongs to the methyltransferase superfamily. Tam family.

The protein localises to the cytoplasm. The enzyme catalyses trans-aconitate + S-adenosyl-L-methionine = (E)-3-(methoxycarbonyl)pent-2-enedioate + S-adenosyl-L-homocysteine. Functionally, catalyzes the S-adenosylmethionine monomethyl esterification of trans-aconitate. This Escherichia coli O9:H4 (strain HS) protein is Trans-aconitate 2-methyltransferase.